The sequence spans 427 residues: Pectin acetylesterase 5 (427 aa).

The signal sequence occupies residues 1 to 35 (MAIPRFSSLLRCRKWAKSDWLVASIGCVLIVFFLS). The N-linked (GlcNAc...) asparagine glycan is linked to asparagine 173. Catalysis depends on charge relay system residues serine 209, aspartate 305, and histidine 372. N-linked (GlcNAc...) asparagine glycosylation occurs at asparagine 391.

Belongs to the pectinacetylesterase family.

The protein localises to the secreted. It localises to the cell wall. Hydrolyzes acetyl esters in homogalacturonan regions of pectin. In type I primary cell wall, galacturonic acid residues of pectin can be acetylated at the O-2 and O-3 positions. Decreasing the degree of acetylation of pectin gels in vitro alters their physical properties. This is Pectin acetylesterase 5 from Arabidopsis thaliana (Mouse-ear cress).